Here is a 210-residue protein sequence, read N- to C-terminus: Na(+)-translocating NADH-quinone reductase subunit D (210 aa).

The next 6 helical transmembrane spans lie at 11 to 31 (ILAP…VCSA), 42 to 62 (FVMT…VSLI), 72 to 92 (IIVQ…VLKA), 103 to 123 (VFVG…AFAM), 131 to 151 (FIDG…VGFF), and 178 to 198 (NGLM…IWAI).

It belongs to the NqrDE/RnfAE family. In terms of assembly, composed of six subunits; NqrA, NqrB, NqrC, NqrD, NqrE and NqrF.

The protein resides in the cell inner membrane. The enzyme catalyses a ubiquinone + n Na(+)(in) + NADH + H(+) = a ubiquinol + n Na(+)(out) + NAD(+). Its function is as follows. NQR complex catalyzes the reduction of ubiquinone-1 to ubiquinol by two successive reactions, coupled with the transport of Na(+) ions from the cytoplasm to the periplasm. NqrA to NqrE are probably involved in the second step, the conversion of ubisemiquinone to ubiquinol. This is Na(+)-translocating NADH-quinone reductase subunit D from Vibrio atlanticus (strain LGP32) (Vibrio splendidus (strain Mel32)).